The primary structure comprises 155 residues: Small ribosomal subunit protein uS7 (155 aa).

This sequence belongs to the universal ribosomal protein uS7 family. Part of the 30S ribosomal subunit. Contacts proteins S9 and S11.

Functionally, one of the primary rRNA binding proteins, it binds directly to 16S rRNA where it nucleates assembly of the head domain of the 30S subunit. Is located at the subunit interface close to the decoding center, probably blocks exit of the E-site tRNA. The polypeptide is Small ribosomal subunit protein uS7 (Helicobacter acinonychis (strain Sheeba)).